Reading from the N-terminus, the 188-residue chain is Elongation factor P (188 aa).

This sequence belongs to the elongation factor P family.

The protein resides in the cytoplasm. The protein operates within protein biosynthesis; polypeptide chain elongation. Its function is as follows. Involved in peptide bond synthesis. Stimulates efficient translation and peptide-bond synthesis on native or reconstituted 70S ribosomes in vitro. Probably functions indirectly by altering the affinity of the ribosome for aminoacyl-tRNA, thus increasing their reactivity as acceptors for peptidyl transferase. In Rhodopseudomonas palustris (strain TIE-1), this protein is Elongation factor P.